Reading from the N-terminus, the 433-residue chain is MRSHGQQISDRLTVEVDCHSLGPSECPSMTSSFSPLDSPTPTPTSLYSQGSMASPGWHEHPHYHHGVPMERRTSATPLRSAFRMADITSGDAMMNMPCGNMDRQDQMALPDYLPAYEENVDQLWIPQDMPKTYQEPQFPYHASMSQYNQMARNYYHRPQQAGYLPESASNPCLSRPIFTQPTERMPNSASMTNMLHWMPSHESLVPQTITPAQVQPFPSGPVTPPSSSYSDFPTNIPTFKSHTPSTPHRSVSMGTPSGSDTPVSRMSGHNDYQEEFQLSPVYREGMMQRHRQPSRKSSKKQLLRSNLSLENLPSIIKQVQFKCKEPGCKGRFKRQEHLKRHMKSHSKEKPHVCWVPGCHRAFSRSDNLNAHYTKTHSKRGGRNRYVATLDETSQDFDPDFRGQLTPDGRPIYGSKLEDSMPDCGELSVDGWDD.

Disordered stretches follow at residues 23-54 (PSEC…SMAS) and 238-268 (TFKS…RMSG). The span at 30-48 (TSSFSPLDSPTPTPTSLYS) shows a compositional bias: low complexity. Polar residues predominate over residues 238-264 (TFKSHTPSTPHRSVSMGTPSGSDTPVS). 2 consecutive C2H2-type zinc fingers follow at residues 321–345 (FKCK…MKSH) and 351–376 (HVCW…TKTH). A disordered region spans residues 391 to 423 (ETSQDFDPDFRGQLTPDGRPIYGSKLEDSMPDC).

Its subcellular location is the nucleus. BrlA, abaA and wetA are pivotal regulators of conidiophore development and conidium maturation. They act individually and together to regulate their own expression and that of numerous other sporulation-specific genes. Binds promoters of target genes at brlA response elements (BREs) containing the conserved sequence 5'-(C/A)(A/G)AGGG(G/A)-3'. This chain is C2H2 type master regulator of conidiophore development brlA, found in Penicillium camemberti (strain FM 013).